We begin with the raw amino-acid sequence, 564 residues long: M protein, serotype 12 (564 aa).

Residues 1–41 form the signal peptide; the sequence is MAKNTTNRHYSLRKLKTGTASVAVALTVVGAGLVAGQTVRA. The stretch at 44 to 505 forms a coiled coil; sequence SDLVAEKQRL…RAGKASDSQT (462 aa). C repeat units follow at residues 285-319, 327-361, 363-397, and 405-439; these read KQLEEQKQILDASRKGTARDLEAVRQAKKATEAEL, AKVTEQKQILDASRKGTARDLEAVRKSKKQQVEAA, KQLEEQNKISEASRKGLRRDLDTSREAKKQVEKDL, and DKVKEEKQISDASRQGLRRDLDASREAKKQVEKAL. Disordered stretches follow at residues 372–391 and 404–438; these read SEASRKGLRRDLDTSREAKK and LDKVKEEKQISDASRQGLRRDLDASREAKKQVEKA. 2 stretches are compositionally biased toward basic and acidic residues: residues 404–413 and 421–438; these read LDKVKEEKQI and LRRDLDASREAKKQVEKA. D repeat units follow at residues 472-477, 478-483, 486-491, and 493-498; these read AKLEAE, AKALKE, AKQAEE, and AKLRAG. The disordered stretch occupies residues 493–550; it reads AKLRAGKASDSQTPDAKPGNKAVPGKGQAPQAGTKPNQNKAPMKETKRQLPSTGETAN. An LPXTG sorting signal motif is present at residues 542–546; sequence LPSTG. At T545 the chain carries Pentaglycyl murein peptidoglycan amidated threonine. Residues 546–564 constitute a propeptide, removed by sortase; the sequence is GETANPFFTAAALTVMAAA.

The protein belongs to the M protein family.

Its subcellular location is the secreted. The protein localises to the cell wall. This protein is one of the different antigenic serotypes of protein M. Protein M is closely associated with virulence of the bacterium and can render the organism resistant to phagocytosis. The protein is M protein, serotype 12 (emm12) of Streptococcus pyogenes.